Consider the following 142-residue polypeptide: Pro-vaccinia growth factor (142 aa).

An N-terminal signal peptide occupies residues 1–18 (MSMKYLMLLFAAMIIRSF). The Extracellular portion of the chain corresponds to 19–100 (ADSGNAIETT…SENPNTTTSY (82 aa)). N34 carries an N-linked (GlcNAc...) asparagine; by host glycan. In terms of domain architecture, EGF-like spans 41–81 (AIRLCGPEGDGYCLHGDCIHARDIDGMYCRCSHGYTGIRCQ). 3 disulfide bridges follow: C45–C58, C53–C69, and C71–C80. The N-linked (GlcNAc...) asparagine; by host glycan is linked to N95. Residues 101 to 121 (IPSPGIMLVLVGIIIIITCCL) traverse the membrane as a helical segment. Residues 122-142 (LSVYRFTRRTNKLPLQDMVVP) lie on the Cytoplasmic side of the membrane.

This sequence belongs to the orthopoxvirus OPG019 family. In terms of assembly, vaccinia growth factor interacts with host EGFR and promotes EGFR dimerization.

The protein localises to the host membrane. The protein resides in the secreted. In terms of biological role, stimulates cellular proliferation (hyperplasia)and mobility around infected cells to promote rapid and efficient spread of infection. This effect is beneficial for virus replication in vivo, because poxviruses replicate possibly better in proliferating cells than in quiescent cells. Acts by binding host EGFR, inducing its dimerization, autophosphorylation and leading to activation of several cellular pathways regulating cell proliferation or cell survival. The activation by host EGFR of mitogen activated protein kinases (MAPK) and extracellular-signal regulated kinases (ERK) are essential for the positive effect of vaccinia growth factor on poxvirus virulence in vivo. The sequence is that of Pro-vaccinia growth factor (OPG019) from Vaccinia virus (strain Copenhagen) (VACV).